The chain runs to 75 residues: Tautomerase PptA (75 aa).

The active-site Proton acceptor; via imino nitrogen is Pro-2.

Belongs to the 4-oxalocrotonate tautomerase family. PptA subfamily. Homodimer.

The protein resides in the cytoplasm. The polypeptide is Tautomerase PptA (Escherichia coli O139:H28 (strain E24377A / ETEC)).